We begin with the raw amino-acid sequence, 310 residues long: Glutaminase (310 aa).

Residues serine 67, asparagine 118, glutamate 161, asparagine 168, tyrosine 192, tyrosine 244, and valine 262 each coordinate substrate.

Belongs to the glutaminase family. Homotetramer.

The enzyme catalyses L-glutamine + H2O = L-glutamate + NH4(+). The chain is Glutaminase from Legionella pneumophila (strain Lens).